Consider the following 92-residue polypeptide: MTRSLKKGPFVDHHLVAKADKAVTNKDKKPIKTWSRRSMILPEFIGLTIAVHNGKQHVPVYITDQMVGHKLGEFALTRTFKGHPADKKVVRK.

Belongs to the universal ribosomal protein uS19 family.

Its function is as follows. Protein S19 forms a complex with S13 that binds strongly to the 16S ribosomal RNA. The chain is Small ribosomal subunit protein uS19 from Polaromonas naphthalenivorans (strain CJ2).